The chain runs to 118 residues: Group 1 truncated hemoglobin GlbN (118 aa).

Residue histidine 70 participates in heme binding.

It belongs to the truncated hemoglobin family. Group I subfamily. Monomer. The cofactor is heme.

It localises to the membrane. The protein is Group 1 truncated hemoglobin GlbN (glbN) of Nostoc sp. (strain MUN 8820).